Here is a 76-residue protein sequence, read N- to C-terminus: Putative snRNP Sm-like protein (76 aa).

The Sm domain occupies Arg4–Glu76.

Belongs to the snRNP Sm proteins family.

The sequence is that of Putative snRNP Sm-like protein from Thermococcus kodakarensis (strain ATCC BAA-918 / JCM 12380 / KOD1) (Pyrococcus kodakaraensis (strain KOD1)).